We begin with the raw amino-acid sequence, 227 residues long: Guanylate kinase (227 aa).

Positions 21–199 constitute a Guanylate kinase-like domain; it reads GNLFMVVAPS…ALAELECIVA (179 aa). 28–35 contacts ATP; the sequence is APSGAGKS.

The protein belongs to the guanylate kinase family.

The protein resides in the cytoplasm. The catalysed reaction is GMP + ATP = GDP + ADP. Essential for recycling GMP and indirectly, cGMP. This Burkholderia thailandensis (strain ATCC 700388 / DSM 13276 / CCUG 48851 / CIP 106301 / E264) protein is Guanylate kinase.